Reading from the N-terminus, the 64-residue chain is MKRGGAYYRFRLVGHFDVSSGTPTIAGREVCKMQSRNSSQVIVRACITVSGFFISAQQVRALSR.

This is an uncharacterized protein from Escherichia phage lambda (Bacteriophage lambda).